Reading from the N-terminus, the 943-residue chain is Receptor-like protein 35 (943 aa).

A signal peptide spans 1-31 (MTGSWNPTSIIIPVTLSFLLSFIHNFADVVA). The Extracellular portion of the chain corresponds to 32-897 (APTRHLCLPE…EEEDEEEISW (866 aa)). 8 N-linked (GlcNAc...) asparagine glycosylation sites follow: asparagine 67, asparagine 82, asparagine 118, asparagine 147, asparagine 171, asparagine 195, asparagine 219, and asparagine 222. 11 LRR repeats span residues 124-148 (LQNL…IGNL), 150-171 (HLTS…SIEN), 172-196 (LSRL…IGNL), 198-220 (HLTS…IGNL), 222-244 (NLTF…IGNL), 245-267 (ARLT…SFGN), 268-292 (LNQL…LLNL), 293-317 (TRLS…SLLS), 319-340 (LMDF…LFNI), 341-364 (PPLI…NISS), and 366-389 (SNLQ…LSRF). Residues asparagine 291 and asparagine 312 are each glycosylated (N-linked (GlcNAc...) asparagine). 2 N-linked (GlcNAc...) asparagine glycosylation sites follow: asparagine 354 and asparagine 361. One copy of the LRR 12; degenerate repeat lies at 390–414 (VNLTLFDLSHLNTQCRPVDFSIFSH). N-linked (GlcNAc...) asparagine glycosylation is present at asparagine 391. 16 LRR repeats span residues 415–439 (LKSL…ILPY), 440–463 (FKTL…SVSS), 467–490 (SQSI…LRTQ), 491–514 (HELG…LWTL), 515–537 (PNLF…SKKH), 544–568 (KPSM…ICGL), 569–592 (RSLN…MEKL), 593–617 (KSTL…IFES), 619–639 (RSLD…LIRF), 640–665 (SNLE…SLSK), 667–685 (QVLV…EATF), 686–709 (PELR…YFVK), 753–777 (LTIY…IGLL), 778–801 (KELL…MGNL), 802–825 (TALE…LGDL), and 827–850 (FLAY…QFRR). Residue asparagine 457 is glycosylated (N-linked (GlcNAc...) asparagine). 5 N-linked (GlcNAc...) asparagine glycosylation sites follow: asparagine 521, asparagine 524, asparagine 556, asparagine 582, and asparagine 605. N-linked (GlcNAc...) asparagine glycosylation is present at asparagine 653. A glycan (N-linked (GlcNAc...) asparagine) is linked at asparagine 699. Residues asparagine 784 and asparagine 800 are each glycosylated (N-linked (GlcNAc...) asparagine). Residues asparagine 832, asparagine 852, and asparagine 882 are each glycosylated (N-linked (GlcNAc...) asparagine). The helical transmembrane segment at 898 to 918 (IAAAIGFIPGIVFGLTIGYIL) threads the bilayer. Residues 919–943 (VSYKPEWFMNPFGRNNRRRRNTTTH) lie on the Cytoplasmic side of the membrane.

It belongs to the RLP family.

It is found in the cell membrane. The protein is Receptor-like protein 35 of Arabidopsis thaliana (Mouse-ear cress).